We begin with the raw amino-acid sequence, 390 residues long: tRNA(Met) cytidine acetate ligase (390 aa).

Residues 7–20, glycine 101, asparagine 162, and arginine 187 each bind ATP; that span reads VVEY…HKLH.

The protein belongs to the TmcAL family.

It is found in the cytoplasm. The enzyme catalyses cytidine(34) in elongator tRNA(Met) + acetate + ATP = N(4)-acetylcytidine(34) in elongator tRNA(Met) + AMP + diphosphate. Its function is as follows. Catalyzes the formation of N(4)-acetylcytidine (ac(4)C) at the wobble position of elongator tRNA(Met), using acetate and ATP as substrates. First activates an acetate ion to form acetyladenylate (Ac-AMP) and then transfers the acetyl group to tRNA to form ac(4)C34. This Listeria monocytogenes serotype 4a (strain HCC23) protein is tRNA(Met) cytidine acetate ligase.